A 227-amino-acid polypeptide reads, in one-letter code: Prolactin (227 aa).

The N-terminal stretch at 1 to 28 (MNIKGSPWKGSLLLLLVSNLLLCQNVAP) is a signal peptide. Cys32 and Cys39 are joined by a disulfide. The residue at position 54 (Ser54) is a Phosphoserine. Asn59 carries N-linked (GlcNAc...) asparagine glycosylation. Phosphoserine occurs at positions 62 and 118. 2 disulfide bridges follow: Cys86–Cys202 and Cys219–Cys227.

Belongs to the somatotropin/prolactin family. As to quaternary structure, interacts with PRLR.

The protein resides in the secreted. In terms of biological role, prolactin acts primarily on the mammary gland by promoting lactation. The chain is Prolactin (PRL) from Macaca mulatta (Rhesus macaque).